The sequence spans 463 residues: L-2-hydroxyglutarate dehydrogenase, mitochondrial (463 aa).

The transit peptide at 1 to 51 (MVPALRYLVGACGRARGLFAGGSPGACGFASGRPRPLCGGSRSASTSSFDI) directs the protein to the mitochondrion. Lys-104, Lys-155, and Lys-173 each carry N6-acetyllysine.

It belongs to the L2HGDH family. Requires FAD as cofactor. In terms of tissue distribution, widely expressed. Highly expressed in brain, testis and muscle. Expressed to a lower extent in lymphocytes, fibroblasts, keratinocytes, placenta, bladder, small intestine, liver and bone marrow.

The protein resides in the mitochondrion. It carries out the reaction (S)-2-hydroxyglutarate + A = 2-oxoglutarate + AH2. The polypeptide is L-2-hydroxyglutarate dehydrogenase, mitochondrial (L2HGDH) (Homo sapiens (Human)).